A 93-amino-acid polypeptide reads, in one-letter code: RNA-binding protein Hfq (93 aa).

The Sm domain maps to 11–71 (DVFLNHVRKS…ISTVMPGAPI (61 aa)).

Belongs to the Hfq family. In terms of assembly, homohexamer.

Functionally, RNA chaperone that binds small regulatory RNA (sRNAs) and mRNAs to facilitate mRNA translational regulation in response to envelope stress, environmental stress and changes in metabolite concentrations. Also binds with high specificity to tRNAs. This chain is RNA-binding protein Hfq, found in Granulibacter bethesdensis (strain ATCC BAA-1260 / CGDNIH1).